A 55-amino-acid chain; its full sequence is ATP synthase F(0) complex subunit 8 (55 aa).

The helical transmembrane segment at 7-29 (NPWFYIMLMSWLTFSLIIQPELL) threads the bilayer.

The protein belongs to the ATPase protein 8 family. As to quaternary structure, component of the ATP synthase complex composed at least of ATP5F1A/subunit alpha, ATP5F1B/subunit beta, ATP5MC1/subunit c (homooctomer), MT-ATP6/subunit a, MT-ATP8/subunit 8, ATP5ME/subunit e, ATP5MF/subunit f, ATP5MG/subunit g, ATP5MK/subunit k, ATP5MJ/subunit j, ATP5F1C/subunit gamma, ATP5F1D/subunit delta, ATP5F1E/subunit epsilon, ATP5PF/subunit F6, ATP5PB/subunit b, ATP5PD/subunit d, ATP5PO/subunit OSCP. ATP synthase complex consists of a soluble F(1) head domain (subunits alpha(3) and beta(3)) - the catalytic core - and a membrane F(0) domain - the membrane proton channel (subunits c, a, 8, e, f, g, k and j). These two domains are linked by a central stalk (subunits gamma, delta, and epsilon) rotating inside the F1 region and a stationary peripheral stalk (subunits F6, b, d, and OSCP).

The protein localises to the mitochondrion membrane. Its function is as follows. Subunit 8, of the mitochondrial membrane ATP synthase complex (F(1)F(0) ATP synthase or Complex V) that produces ATP from ADP in the presence of a proton gradient across the membrane which is generated by electron transport complexes of the respiratory chain. ATP synthase complex consist of a soluble F(1) head domain - the catalytic core - and a membrane F(1) domain - the membrane proton channel. These two domains are linked by a central stalk rotating inside the F(1) region and a stationary peripheral stalk. During catalysis, ATP synthesis in the catalytic domain of F(1) is coupled via a rotary mechanism of the central stalk subunits to proton translocation. In vivo, can only synthesize ATP although its ATP hydrolase activity can be activated artificially in vitro. Part of the complex F(0) domain. The chain is ATP synthase F(0) complex subunit 8 from Musophaga violacea (Violet turaco).